A 429-amino-acid polypeptide reads, in one-letter code: Hemoglobinase (429 aa).

A signal peptide spans 1–19; the sequence is MMLFSLFLISILHILLVKC. Residues 20 to 31 constitute a propeptide that is removed on maturation; it reads QLDTNYEVSDET. The active site involves His151. A disordered region spans residues 288-309; sequence FQGSRDKSSSENDEPPMKPRHS. Positions 292–429 are excised as a propeptide; that stretch reads RDKSSSENDE…INEAIIKICG (138 aa).

It belongs to the peptidase C13 family.

It carries out the reaction Hydrolysis of proteins and small molecule substrates at -Asn-|-Xaa- bonds.. In terms of biological role, this protease is used by the parasite for degradation of the host globin. This Schistosoma mansoni (Blood fluke) protein is Hemoglobinase.